Reading from the N-terminus, the 412-residue chain is Branched-chain alpha-ketoacid dehydrogenase kinase (412 aa).

Residues 1–30 (MILASVLGSGPRGGPPLRPLLGPALSLRAR) constitute a mitochondrion transit peptide. S31 is modified (phosphoserine). The residue at position 52 (S52) is a Phosphoserine; by autocatalysis. The region spanning 159–404 (LDDHKDVVTL…DVYLRLRHID (246 aa)) is the Histidine kinase domain. 2 positions are modified to N6-acetyllysine: K192 and K233. ATP is bound by residues N279 and D315. Position 279 (N279) interacts with Mg(2+). 3 residues coordinate K(+): V328, D330, and F333. 2 residues coordinate ATP: T334 and T335. 2 positions are modified to phosphoserine: S356 and S360. ATP is bound by residues H364, G367, and L370. G367 provides a ligand contact to K(+).

The protein belongs to the PDK/BCKDK protein kinase family. As to quaternary structure, homodimer. Homotetramer. Dimerizes through interaction of two opposing nucleotide-binding domains. Interacts with E2 component of the branched-chain alpha-ketoacid dehydrogenase (BCKDH) complex. Competes with BCKDK for binding to the E2 component; this interaction is modulated by branched-chain alpha-keto acids. At steady state, BCKDH holoenzyme contains BCKDK and BCKDHA is phosphorylated. In response to high levels of branched-chain alpha-keto acids, the inhibitory BCKDK is replaced by activating PPM1K leading to BCKDHA dephosphorylation and BCAA degradation. In terms of processing, autophosphorylated.

The protein localises to the mitochondrion matrix. The protein resides in the mitochondrion. It carries out the reaction L-seryl-[3-methyl-2-oxobutanoate dehydrogenase] + ATP = O-phospho-L-seryl-[3-methyl-2-oxobutanoate dehydrogenase] + ADP + H(+). The enzyme catalyses L-seryl-[protein] + ATP = O-phospho-L-seryl-[protein] + ADP + H(+). Serine/threonine-protein kinase component of macronutrients metabolism. Forms a functional kinase and phosphatase pair with PPM1K, serving as a metabolic regulatory node that coordinates branched-chain amino acids (BCAAs) with glucose and lipid metabolism via two distinct phosphoprotein targets: mitochondrial BCKDHA subunit of the branched-chain alpha-ketoacid dehydrogenase (BCKDH) complex and cytosolic ACLY, a lipogenic enzyme of Krebs cycle. Phosphorylates and inactivates mitochondrial BCKDH complex a multisubunit complex consisting of three multimeric components each involved in different steps of BCAA catabolism: E1 composed of BCKDHA and BCKDHB, E2 core composed of DBT monomers, and E3 composed of DLD monomers. Associates with the E2 component of BCKDH complex and phosphorylates BCKDHA on Ser-347, leading to conformational changes that interrupt substrate channeling between E1 and E2 and inactivates the BCKDH complex. Phosphorylates ACLY on Ser-455 in response to changes in cellular carbohydrate abundance such as occurs during fasting to feeding metabolic transition. Refeeding stimulates MLXIPL/ChREBP transcription factor, leading to increased BCKDK to PPM1K expression ratio, phosphorylation and activation of ACLY that ultimately results in the generation of malonyl-CoA and oxaloacetate immediate substrates of de novo lipogenesis and glucogenesis, respectively. Recognizes phosphosites having SxxE/D canonical motif. In Bos taurus (Bovine), this protein is Branched-chain alpha-ketoacid dehydrogenase kinase (BCKDK).